The following is a 208-amino-acid chain: Large ribosomal subunit protein uL4 (208 aa).

Residues 50–83 are disordered; the sequence is VKTRAEVSGGGRKPWKQKGTGRARQGSIRAPQWK.

It belongs to the universal ribosomal protein uL4 family. As to quaternary structure, part of the 50S ribosomal subunit.

One of the primary rRNA binding proteins, this protein initially binds near the 5'-end of the 23S rRNA. It is important during the early stages of 50S assembly. It makes multiple contacts with different domains of the 23S rRNA in the assembled 50S subunit and ribosome. Its function is as follows. Forms part of the polypeptide exit tunnel. This is Large ribosomal subunit protein uL4 from Mycoplasma capricolum subsp. capricolum (strain California kid / ATCC 27343 / NCTC 10154).